The sequence spans 367 residues: Endopolygalacturonase B (367 aa).

The first 17 residues, 1 to 17 (MHFQLLGLAALGSLAAA), serve as a signal peptide directing secretion. The propeptide occupies 18-30 (APAPSRTSELVER). An intrachain disulfide couples Cys-34 to Cys-49. PbH1 repeat units follow at residues 161-191 (GNDVHLTDITIDNSDGDNNGGHNTDAFDVSE), 192-213 (SNGVYITGANVKNQDDCLAINS), 214-234 (GENIEFTGATCSGGHGISIGS), 243-264 (VKNVKVADSTVVDSDNGIRIKT), and 272-294 (VSGVTYENITLKNIKKNGIVIEQ). The active-site Proton donor is Asp-206. A disulfide bond links Cys-208 and Cys-224. His-228 is a catalytic residue. N-linked (GlcNAc...) asparagine glycosylation occurs at Asn-279. 2 cysteine pairs are disulfide-bonded: Cys-334–Cys-339 and Cys-358–Cys-367.

This sequence belongs to the glycosyl hydrolase 28 family.

It localises to the secreted. It carries out the reaction (1,4-alpha-D-galacturonosyl)n+m + H2O = (1,4-alpha-D-galacturonosyl)n + (1,4-alpha-D-galacturonosyl)m.. In terms of biological role, involved in maceration and soft-rotting of plant tissue. Hydrolyzes the 1,4-alpha glycosidic bonds of de-esterified pectate in the smooth region of the plant cell wall. This Aspergillus flavus (strain ATCC MYA-384 / AF70) protein is Endopolygalacturonase B (pgaB).